We begin with the raw amino-acid sequence, 206 residues long: Sclerostin domain-containing protein 1 (206 aa).

Residues M1–S22 form the signal peptide. The disordered stretch occupies residues A40 to N68. Polar residues predominate over residues S43–R54. An N-linked (GlcNAc...) asparagine glycan is attached at N47. 4 cysteine pairs are disulfide-bonded: C75–C133, C89–C147, C100–C163, and C104–C165. The CTCK domain occupies C75–R170. N173 carries N-linked (GlcNAc...) asparagine glycosylation. The disordered stretch occupies residues S176 to S206. Over residues V188 to S206 the composition is skewed to basic residues.

It belongs to the sclerostin family. As to quaternary structure, interacts with LRP6.

It localises to the secreted. Can activate or inhibit Wnt signaling in a context-dependent manner. Activates the canonical Wnt pathway whereby acts through Disheveled proteins and beta-catenin. Antagonises Wnt signaling through the canonical pathways presumably by blocking accessibility of certain WNTs to their receptors. Induces posterior neural markers via components of the canonical Wnt pathway. In Gallus gallus (Chicken), this protein is Sclerostin domain-containing protein 1 (SOSTDC1).